The chain runs to 189 residues: Movement protein (189 aa).

This sequence belongs to the tombusvirus/aureusvirus movement protein p22 family. Interacts with host protein HFI22. Post-translationally, phosphorylated.

It is found in the host membrane. Its function is as follows. Transports viral genome to neighboring plant cells directly through plasmosdesmata, without any budding. The movement protein allows efficient cell to cell propagation, by bypassing the host cell wall barrier. Displays RNA-binding activity. This chain is Movement protein, found in Capsicum annuum (Capsicum pepper).